Consider the following 368-residue polypeptide: Tetraacyldisaccharide 4'-kinase (368 aa).

66–73 lines the ATP pocket; sequence TVGGTGKT.

It belongs to the LpxK family.

The catalysed reaction is a lipid A disaccharide + ATP = a lipid IVA + ADP + H(+). It participates in glycolipid biosynthesis; lipid IV(A) biosynthesis; lipid IV(A) from (3R)-3-hydroxytetradecanoyl-[acyl-carrier-protein] and UDP-N-acetyl-alpha-D-glucosamine: step 6/6. Transfers the gamma-phosphate of ATP to the 4'-position of a tetraacyldisaccharide 1-phosphate intermediate (termed DS-1-P) to form tetraacyldisaccharide 1,4'-bis-phosphate (lipid IVA). The polypeptide is Tetraacyldisaccharide 4'-kinase (Desulfatibacillum aliphaticivorans).